Here is a 219-residue protein sequence, read N- to C-terminus: Adenylate kinase (219 aa).

10-15 (GAGKGT) is an ATP binding site. An NMP region spans residues 30–59 (STGDMLRAAVKAGTPLGQQAKKIMDEGGLV). Residues threonine 31, arginine 36, 57–59 (GLV), 85–88 (GFPR), and glutamine 92 each bind AMP. The interval 122–159 (GRRVHPGSGRVYHVTHNPPRQEGKDDVTGEDLVQREDD) is LID. ATP is bound by residues arginine 123 and 132–133 (VY). The segment at 128–150 (GSGRVYHVTHNPPRQEGKDDVTG) is disordered. The segment covering 140 to 150 (PRQEGKDDVTG) has biased composition (basic and acidic residues). Positions 156 and 167 each coordinate AMP. Residue arginine 203 participates in ATP binding.

The protein belongs to the adenylate kinase family. Monomer.

It localises to the cytoplasm. It catalyses the reaction AMP + ATP = 2 ADP. It participates in purine metabolism; AMP biosynthesis via salvage pathway; AMP from ADP: step 1/1. Catalyzes the reversible transfer of the terminal phosphate group between ATP and AMP. Plays an important role in cellular energy homeostasis and in adenine nucleotide metabolism. The protein is Adenylate kinase of Halorhodospira halophila (strain DSM 244 / SL1) (Ectothiorhodospira halophila (strain DSM 244 / SL1)).